The chain runs to 252 residues: Receptor expression-enhancing protein 3-B (252 aa).

A run of 3 helical transmembrane segments spans residues 1–21, 35–55, and 57–77; these read MVSGMICKAVVLVFGILYPAY, YVRWMMYWIVFALYTVTETIA, and LTVSWFPLYFELKIAFVVWLL. Residues 163-225 form a disordered region; sequence ETAETRFFPD…GLRRSQSMRS (63 aa). Acidic residues predominate over residues 198-211; sequence RTDEDVEVNSEDEV.

This sequence belongs to the DP1 family.

The protein localises to the endoplasmic reticulum membrane. Its function is as follows. Microtubule-binding protein required to ensure proper cell division and nuclear envelope reassembly by sequestering the endoplasmic reticulum away from chromosomes during mitosis. Probably acts by clearing the endoplasmic reticulum membrane from metaphase chromosomes. This Xenopus laevis (African clawed frog) protein is Receptor expression-enhancing protein 3-B (reep3-b).